Consider the following 794-residue polypeptide: Phosphoribosylformylglycinamidine synthase subunit PurL (794 aa).

H47 is a catalytic residue. Y50 and K89 together coordinate ATP. E91 is a binding site for Mg(2+). Residues 92–95 (SHNH) and R114 each bind substrate. H93 serves as the catalytic Proton acceptor. Mg(2+) is bound at residue D115. Substrate is bound at residue Q238. Residue D266 coordinates Mg(2+). 310–312 (ESQ) lines the substrate pocket. ATP contacts are provided by D522 and G559. N560 contributes to the Mg(2+) binding site. Position 562 (S562) interacts with substrate.

Belongs to the FGAMS family. Monomer. Part of the FGAM synthase complex composed of 1 PurL, 1 PurQ and 2 PurS subunits.

The protein resides in the cytoplasm. The catalysed reaction is N(2)-formyl-N(1)-(5-phospho-beta-D-ribosyl)glycinamide + L-glutamine + ATP + H2O = 2-formamido-N(1)-(5-O-phospho-beta-D-ribosyl)acetamidine + L-glutamate + ADP + phosphate + H(+). It participates in purine metabolism; IMP biosynthesis via de novo pathway; 5-amino-1-(5-phospho-D-ribosyl)imidazole from N(2)-formyl-N(1)-(5-phospho-D-ribosyl)glycinamide: step 1/2. Part of the phosphoribosylformylglycinamidine synthase complex involved in the purines biosynthetic pathway. Catalyzes the ATP-dependent conversion of formylglycinamide ribonucleotide (FGAR) and glutamine to yield formylglycinamidine ribonucleotide (FGAM) and glutamate. The FGAM synthase complex is composed of three subunits. PurQ produces an ammonia molecule by converting glutamine to glutamate. PurL transfers the ammonia molecule to FGAR to form FGAM in an ATP-dependent manner. PurS interacts with PurQ and PurL and is thought to assist in the transfer of the ammonia molecule from PurQ to PurL. This is Phosphoribosylformylglycinamidine synthase subunit PurL from Prochlorococcus marinus (strain MIT 9313).